We begin with the raw amino-acid sequence, 154 residues long: Myoglobin (154 aa).

Residues 2–148 (GLSDGEWQLV…FRHDMAAKYK (147 aa)) enclose the Globin domain. A Phosphoserine modification is found at serine 4. Histidine 65 is a binding site for nitrite. Position 65 (histidine 65) interacts with O2. Threonine 68 carries the post-translational modification Phosphothreonine. Histidine 94 contributes to the heme b binding site.

The protein belongs to the globin family. As to quaternary structure, monomeric.

Its subcellular location is the cytoplasm. The protein localises to the sarcoplasm. The catalysed reaction is Fe(III)-heme b-[protein] + nitric oxide + H2O = Fe(II)-heme b-[protein] + nitrite + 2 H(+). It catalyses the reaction H2O2 + AH2 = A + 2 H2O. Functionally, monomeric heme protein which primary function is to store oxygen and facilitate its diffusion within muscle tissues. Reversibly binds oxygen through a pentacoordinated heme iron and enables its timely and efficient release as needed during periods of heightened demand. Depending on the oxidative conditions of tissues and cells, and in addition to its ability to bind oxygen, it also has a nitrite reductase activity whereby it regulates the production of bioactive nitric oxide. Under stress conditions, like hypoxia and anoxia, it also protects cells against reactive oxygen species thanks to its pseudoperoxidase activity. This is Myoglobin (MB) from Osphranter rufus (Red kangaroo).